Here is a 467-residue protein sequence, read N- to C-terminus: ATP synthase subunit beta (467 aa).

152-159 (GGAGVGKT) lines the ATP pocket.

The protein belongs to the ATPase alpha/beta chains family. As to quaternary structure, F-type ATPases have 2 components, CF(1) - the catalytic core - and CF(0) - the membrane proton channel. CF(1) has five subunits: alpha(3), beta(3), gamma(1), delta(1), epsilon(1). CF(0) has three main subunits: a(1), b(2) and c(9-12). The alpha and beta chains form an alternating ring which encloses part of the gamma chain. CF(1) is attached to CF(0) by a central stalk formed by the gamma and epsilon chains, while a peripheral stalk is formed by the delta and b chains.

It is found in the cell inner membrane. It catalyses the reaction ATP + H2O + 4 H(+)(in) = ADP + phosphate + 5 H(+)(out). Functionally, produces ATP from ADP in the presence of a proton gradient across the membrane. The catalytic sites are hosted primarily by the beta subunits. The protein is ATP synthase subunit beta of Wolinella succinogenes (strain ATCC 29543 / DSM 1740 / CCUG 13145 / JCM 31913 / LMG 7466 / NCTC 11488 / FDC 602W) (Vibrio succinogenes).